A 221-amino-acid polypeptide reads, in one-letter code: GTP-binding nuclear protein Ran-3 (221 aa).

Residues 10–174 (DYPSFKLVIV…LYLARKLAGD (165 aa)) form the Small GTPase Ran-type domain. 21–28 (DGGTGKTT) provides a ligand contact to GTP. The switch-I stretch occupies residues 40–48 (KKYEPTIGV). Residues Gly71, 125–128 (NKVD), and 153–155 (SAK) contribute to the GTP site. The segment at 71 to 87 (GQEKFGGLRDGYYIHGQ) is switch-II. A disordered region spans residues 201–221 (EAELAAAASQPLPDDDDDTFE).

It belongs to the small GTPase superfamily. Ran family. As to quaternary structure, found in a nuclear export complex with RanGTP, exportin and pre-miRNA. Interacts with RanBP1a and RanBP1b. Interacts with KPNB1.

Its subcellular location is the nucleus. Its function is as follows. GTP-binding protein involved in nucleocytoplasmic transport. Required for the import of protein into the nucleus and also for RNA export. Involved in chromatin condensation and control of cell cycle. This is GTP-binding nuclear protein Ran-3 (RAN3) from Arabidopsis thaliana (Mouse-ear cress).